Consider the following 128-residue polypeptide: NADH dehydrogenase [ubiquinone] 1 beta subcomplex subunit 6 (128 aa).

Thr2 carries the N-acetylthreonine modification. Lys24 carries the N6-acetyllysine modification. The chain crosses the membrane as a helical span at residues 68–86 (SIFVFTHVLVPVWIIHYYM).

The protein belongs to the complex I NDUFB6 subunit family. In terms of assembly, complex I is composed of 45 different subunits.

Its subcellular location is the mitochondrion inner membrane. Accessory subunit of the mitochondrial membrane respiratory chain NADH dehydrogenase (Complex I), that is believed not to be involved in catalysis. Complex I functions in the transfer of electrons from NADH to the respiratory chain. The immediate electron acceptor for the enzyme is believed to be ubiquinone. This is NADH dehydrogenase [ubiquinone] 1 beta subcomplex subunit 6 (NDUFB6) from Pan troglodytes (Chimpanzee).